Reading from the N-terminus, the 369-residue chain is Transposase for insertion sequence element IS1201 (369 aa).

This sequence belongs to the transposase mutator family.

Required for the transposition of the insertion element. The chain is Transposase for insertion sequence element IS1201 from Lactobacillus helveticus (Lactobacillus suntoryeus).